Consider the following 180-residue polypeptide: Large ribosomal subunit protein uL6 (180 aa).

The protein belongs to the universal ribosomal protein uL6 family. As to quaternary structure, part of the 50S ribosomal subunit.

Functionally, this protein binds to the 23S rRNA, and is important in its secondary structure. It is located near the subunit interface in the base of the L7/L12 stalk, and near the tRNA binding site of the peptidyltransferase center. This Borreliella burgdorferi (strain ATCC 35210 / DSM 4680 / CIP 102532 / B31) (Borrelia burgdorferi) protein is Large ribosomal subunit protein uL6.